A 260-amino-acid chain; its full sequence is Vaa serine proteinase homolog 1 (260 aa).

The N-terminal stretch at 1 to 18 (MVLIRVLANLLVLQLSYA) is a signal peptide. The propeptide occupies 19 to 24 (QKSSEL). The 227-residue stretch at 25-251 (VIGGDECNIN…YTDWIQSIIA (227 aa)) folds into the Peptidase S1 domain. Disulfide bonds link Cys31/Cys165, Cys52/Cys68, Cys100/Cys258, Cys144/Cys212, Cys176/Cys191, and Cys202/Cys227. N-linked (GlcNAc...) asparagine glycosylation occurs at Asn123. A key residues for binding to FVIIIa region spans residues 172–186 (DYSVCQKVYRKLPEK). Residue Asn253 is glycosylated (N-linked (GlcNAc...) asparagine).

The protein belongs to the peptidase S1 family. Snake venom subfamily. Post-translationally, N-glycosylated. The toxin exists in multiple glycoforms. Expressed by the venom gland.

The protein resides in the secreted. Its function is as follows. This is the first member of the serine protease family that has strong anticoagulant activity and lacks enzymatic activity. It inhibits activities of three blood coagulation complexes: (1) prothrombinase complex (composed of blood coagulation factors Va and Xa (F5 and F10)) (IC(50)=164.1 nM), (2) intrinsic tenase complex (composed of factors VIIIa and IXa (F8 and F9)), and (3) extrinsic tenase complex (composed of tissue factor and factor VIIa (F7)). The toxin also has been observed to bind prothrombin, factor FVa, non-activated and activated forms of factors FVII (F7) (FVII and FVIIa), factor FVIIIa (F8), factors FIX and FIXa (F9) and factors FX and FXa (F10). The toxin inhibits the activity of the intrinsic tenase complex mainly by competing with FIXa (F9) for binding to FVIIIa (F8). The sequence is that of Vaa serine proteinase homolog 1 from Vipera ammodytes ammodytes (Western sand viper).